The primary structure comprises 551 residues: GMP synthase [glutamine-hydrolyzing] (551 aa).

The Glutamine amidotransferase type-1 domain occupies 40–233 (KILIVDFGSQ…VRKIAGLTGD (194 aa)). The active-site Nucleophile is the cysteine 117. Active-site residues include histidine 207 and glutamate 209. Residues 234–426 (WTMRAFREEE…LGLPEIFVGR (193 aa)) enclose the GMPS ATP-PPase domain. 261 to 267 (SGGVDSA) lines the ATP pocket.

In terms of assembly, homodimer.

The catalysed reaction is XMP + L-glutamine + ATP + H2O = GMP + L-glutamate + AMP + diphosphate + 2 H(+). Its pathway is purine metabolism; GMP biosynthesis; GMP from XMP (L-Gln route): step 1/1. In terms of biological role, catalyzes the synthesis of GMP from XMP. The protein is GMP synthase [glutamine-hydrolyzing] of Bradyrhizobium diazoefficiens (strain JCM 10833 / BCRC 13528 / IAM 13628 / NBRC 14792 / USDA 110).